A 297-amino-acid chain; its full sequence is 4-hydroxy-tetrahydrodipicolinate synthase (297 aa).

Residue Thr-47 coordinates pyruvate. Residue Tyr-135 is the Proton donor/acceptor of the active site. Lys-163 (schiff-base intermediate with substrate) is an active-site residue. Residue Ile-205 coordinates pyruvate.

It belongs to the DapA family. As to quaternary structure, homotetramer; dimer of dimers.

Its subcellular location is the cytoplasm. The catalysed reaction is L-aspartate 4-semialdehyde + pyruvate = (2S,4S)-4-hydroxy-2,3,4,5-tetrahydrodipicolinate + H2O + H(+). The protein operates within amino-acid biosynthesis; L-lysine biosynthesis via DAP pathway; (S)-tetrahydrodipicolinate from L-aspartate: step 3/4. Its function is as follows. Catalyzes the condensation of (S)-aspartate-beta-semialdehyde [(S)-ASA] and pyruvate to 4-hydroxy-tetrahydrodipicolinate (HTPA). The protein is 4-hydroxy-tetrahydrodipicolinate synthase of Cytophaga hutchinsonii (strain ATCC 33406 / DSM 1761 / CIP 103989 / NBRC 15051 / NCIMB 9469 / D465).